The primary structure comprises 509 residues: Lysine--tRNA ligase (509 aa).

Residues E418 and E425 each coordinate Mg(2+).

It belongs to the class-II aminoacyl-tRNA synthetase family. As to quaternary structure, homodimer. Mg(2+) is required as a cofactor.

The protein resides in the cytoplasm. It catalyses the reaction tRNA(Lys) + L-lysine + ATP = L-lysyl-tRNA(Lys) + AMP + diphosphate. The chain is Lysine--tRNA ligase (lysS) from Acinetobacter baylyi (strain ATCC 33305 / BD413 / ADP1).